The chain runs to 336 residues: UPF0324 membrane protein SP_0034 (336 aa).

8 consecutive transmembrane segments (helical) span residues 65-84, 91-113, 118-140, 153-175, 211-233, 249-271, 286-305, and 312-334; these read LLQYAVVLLGFGLNISQVFA, PVILSTISIALIIAYLFQRFFAL, ATLVGVGSSICGGSAIAATAPVI, VIFFFNVLAALIFPTLGTWLHLS, SATIVKLTRTLAIIPITLFLSYW, VFPLFILYFILASLLTTLLTSLG, FLIVMAMSAIGLKTNLVAMV, and ILLGAICWIAIILTTLGMQTLIG.

Belongs to the UPF0324 family.

It localises to the cell membrane. The polypeptide is UPF0324 membrane protein SP_0034 (Streptococcus pneumoniae serotype 4 (strain ATCC BAA-334 / TIGR4)).